A 215-amino-acid polypeptide reads, in one-letter code: Large ribosomal subunit protein uL3 (215 aa).

Positions 136–155 (GVSISHRSHGSTGQRQDPGK) are disordered. Residue Q151 is modified to N5-methylglutamine.

Belongs to the universal ribosomal protein uL3 family. In terms of assembly, part of the 50S ribosomal subunit. Forms a cluster with proteins L14 and L19. In terms of processing, methylated by PrmB.

Its function is as follows. One of the primary rRNA binding proteins, it binds directly near the 3'-end of the 23S rRNA, where it nucleates assembly of the 50S subunit. This chain is Large ribosomal subunit protein uL3, found in Rickettsia rickettsii (strain Iowa).